Here is a 334-residue protein sequence, read N- to C-terminus: DGAT1/2-independent enzyme synthesizing storage lipids (334 aa).

The Lumenal segment spans residues 1–50 (MTNKNQSFGVGQDSMSSMTCLIHVLEAWFGVEHLEDYWNFANYLLWVFTP). N-linked (GlcNAc...) asparagine glycosylation is present at Asn-5. The helical transmembrane segment at 51–71 (LLLLILPYFTIFLLYLTIIFL) threads the bilayer. The Cytoplasmic segment spans residues 72 to 125 (HIYKRKNVLKEAYSHNLWDGARKTVATLWDGHAAVWHGYEVHGMEKIPEEGPAL). A helical membrane pass occupies residues 126–146 (IIFYHGAIPIDFYYFMAKIFI). Residue His-130 is part of the active site. Residues 147–334 (HKGRTCRVVA…NKQKINQKTL (188 aa)) are Lumenal-facing.

Belongs to the diacylglycerol acyltransferase family. Highly divergent.

Its subcellular location is the endoplasmic reticulum membrane. It carries out the reaction a 1,2-diacylglycerol + a 1,2-diacyl-sn-glycero-3-phosphocholine = a triacylglycerol + a 1-acyl-sn-glycero-3-phosphocholine. The enzyme catalyses a 1-O-alkyl-2-acyl-sn-glycero-3-phosphocholine + a 1,2-diacylglycerol = a 1-O-alkyl-sn-glycero-3-phosphocholine + a triacylglycerol. The catalysed reaction is a 2-acylglycerol + an acyl-CoA = a 1,2-diacylglycerol + CoA. It catalyses the reaction an acyl-CoA + a 1,2-diacyl-sn-glycerol = a triacyl-sn-glycerol + CoA. It carries out the reaction 2-(9Z-octadecenoyl)-glycerol + (9Z)-octadecenoyl-CoA = 1,2-di-(9Z-octadecenoyl)-glycerol + CoA. The enzyme catalyses 1,2-di-(9Z-octadecenoyl)-sn-glycerol + (9Z)-octadecenoyl-CoA = 1,2,3-tri-(9Z-octadecenoyl)-glycerol + CoA. Acyltransferase activity is specifically inhibited by TMX1 at the endoplasmic reticulum, restricting accumulation of triacylglycerol. Functionally, catalytic subunit of the alternative triglyceride biosynthesis pathway, which mediates formation of triacylglycerol from diacylglycerol and membrane phospholipids. Synthesizes triacylglycerol at the expense of membrane phospholipids, such as phosphatidylcholine (PC) and its ether-linked form (ePC), thereby altering the composition of membranes. The alternative triglyceride biosynthesis pathway is probably required to provide the energy required for rapid growth when fuel sources are limiting. It maintains mitochondrial function during periods of extracellular lipid starvation. Can also use acyl-CoA as donor: acts as a acyl-CoA:monoacylglycerol acyltransferase (MGAT), but also shows acyl-CoA:diacylglycerol acyltransferase (DGAT) activity. The polypeptide is DGAT1/2-independent enzyme synthesizing storage lipids (TMEM68) (Bos taurus (Bovine)).